A 587-amino-acid polypeptide reads, in one-letter code: Urease subunit alpha (587 aa).

Residues 134–572 (GGIDTHVHFI…LPLAQRYLYT (439 aa)) form the Urease domain. 3 residues coordinate Ni(2+): His139, His141, and Lys222. The residue at position 222 (Lys222) is an N6-carboxylysine. Position 224 (His224) interacts with substrate. Ni(2+) is bound by residues His251 and His277. His325 (proton donor) is an active-site residue. Asp365 lines the Ni(2+) pocket.

The protein belongs to the metallo-dependent hydrolases superfamily. Urease alpha subunit family. In terms of assembly, heterotrimer of UreA (gamma), UreB (beta) and UreC (alpha) subunits. Three heterotrimers associate to form the active enzyme. The cofactor is Ni cation. Post-translationally, carboxylation allows a single lysine to coordinate two nickel ions.

The protein localises to the cytoplasm. It carries out the reaction urea + 2 H2O + H(+) = hydrogencarbonate + 2 NH4(+). It participates in nitrogen metabolism; urea degradation; CO(2) and NH(3) from urea (urease route): step 1/1. This is Urease subunit alpha from Clostridium perfringens.